A 64-amino-acid chain; its full sequence is Large ribosomal subunit protein bL28 (64 aa).

Positions 1–27 (MAKRDQLTGKGPLSGNTRSHAMNHSKR) are disordered.

It belongs to the bacterial ribosomal protein bL28 family.

This is Large ribosomal subunit protein bL28 from Ureaplasma parvum serovar 3 (strain ATCC 27815 / 27 / NCTC 11736).